The chain runs to 365 residues: Aminomethyltransferase (365 aa).

Belongs to the GcvT family. In terms of assembly, the glycine cleavage system is composed of four proteins: P, T, L and H.

The enzyme catalyses N(6)-[(R)-S(8)-aminomethyldihydrolipoyl]-L-lysyl-[protein] + (6S)-5,6,7,8-tetrahydrofolate = N(6)-[(R)-dihydrolipoyl]-L-lysyl-[protein] + (6R)-5,10-methylene-5,6,7,8-tetrahydrofolate + NH4(+). The glycine cleavage system catalyzes the degradation of glycine. The sequence is that of Aminomethyltransferase from Yersinia pseudotuberculosis serotype O:1b (strain IP 31758).